Consider the following 142-residue polypeptide: Large ribosomal subunit protein uL13 (142 aa).

Belongs to the universal ribosomal protein uL13 family. Part of the 50S ribosomal subunit.

This protein is one of the early assembly proteins of the 50S ribosomal subunit, although it is not seen to bind rRNA by itself. It is important during the early stages of 50S assembly. This chain is Large ribosomal subunit protein uL13, found in Hamiltonella defensa subsp. Acyrthosiphon pisum (strain 5AT).